Reading from the N-terminus, the 334-residue chain is Mitochondrial glycine transporter (334 aa).

3 Solcar repeats span residues 22–106 (SKTT…LRQG), 135–219 (LSNW…LKRR), and 237–321 (SSSS…LILR). Helical transmembrane passes span 28–53 (FVAG…TRVQ), 81–107 (GTLP…RQGI), 141–166 (LATG…VRYE), 194–217 (GFGA…EQLK), 241–267 (INFV…KTRL), and 296–314 (GLGL…AWTV).

Belongs to the mitochondrial carrier (TC 2.A.29) family. SLC25A38 subfamily.

Its subcellular location is the mitochondrion inner membrane. The catalysed reaction is glycine(in) = glycine(out). Mitochondrial glycine transporter that imports glycine into the mitochondrial matrix. Plays an important role in providing glycine for the first enzymatic step in heme biosynthesis, the condensation of glycine with succinyl-CoA to produce 5-aminolevulinate (ALA) in the mitochondrial matrix. The chain is Mitochondrial glycine transporter from Aspergillus clavatus (strain ATCC 1007 / CBS 513.65 / DSM 816 / NCTC 3887 / NRRL 1 / QM 1276 / 107).